We begin with the raw amino-acid sequence, 1501 residues long: RE1-silencing transcription factor A (1501 aa).

Residues 158–180 form a C2H2-type 1 zinc finger; it reads FRCKPCQYKAESEEEFVHHIKIH. Basic and acidic residues predominate over residues 186 to 200; that stretch reads VDNDSKKNPQGKEAD. A disordered region spans residues 186-209; sequence VDNDSKKNPQGKEADSSIPEESDI. 7 C2H2-type zinc fingers span residues 214-236, 246-268, 274-296, 302-324, 330-353, 359-381, and 387-410; these read IQCD…LKHH, YKCT…LRNH, YTCS…IRTH, YQCI…MRTH, FKCE…RQVH, LTCP…VELH, and FLCP…KSRH. Disordered regions lie at residues 491-514, 569-612, 885-929, and 1040-1079; these read SSTQ…SRKS, SFVK…SVAS, PTKV…VPGD, and VAAG…GDEQ. 2 stretches are compositionally biased toward basic and acidic residues: residues 498-512 and 594-605; these read KASE…DKSR and ITEKKEKGKQLD. Residues 1067-1079 show a composition bias toward polar residues; it reads QPTSVQPPGGDEQ. Residues 1463 to 1485 form a C2H2-type 9 zinc finger; the sequence is FVCIFCDRTFRKEEEYTKHLRRH.

Its subcellular location is the nucleus. It localises to the cytoplasm. Its function is as follows. Transcriptional repressor which binds neuron-restrictive silencer element (NRSE) and represses neuronal gene transcription in non-neuronal cells. Plays a role in the early development of the nervous system and is required for proper patterning of the neuroectoderm during gastrulation. This involves the correct speciation of the neuroepithelial domain and adequate development of the non-neural ectoderm. This is RE1-silencing transcription factor A (rest-a) from Xenopus laevis (African clawed frog).